The chain runs to 99 residues: Beta-defensin 127 (99 aa).

The first 20 residues, 1–20 (MGLFMIIAILLFQKPTVTEQ), serve as a signal peptide directing secretion. 3 cysteine pairs are disulfide-bonded: C24–C53, C33–C47, and C37–C54. Positions 66-99 (ITKPPRPKPATLALTLQDYVTIIENFPSLKTQST) are excised as a propeptide.

This sequence belongs to the beta-defensin family.

The protein resides in the secreted. Its function is as follows. Has antibacterial activity. This chain is Beta-defensin 127 (DEFB127), found in Homo sapiens (Human).